The chain runs to 203 residues: Pyrrolidone-carboxylate peptidase (203 aa).

Active-site residues include E78, C141, and H165.

The protein belongs to the peptidase C15 family. Homotetramer.

It localises to the cytoplasm. It carries out the reaction Release of an N-terminal pyroglutamyl group from a polypeptide, the second amino acid generally not being Pro.. Its function is as follows. Removes 5-oxoproline from various penultimate amino acid residues except L-proline. The sequence is that of Pyrrolidone-carboxylate peptidase from Thermoanaerobacter pseudethanolicus (strain ATCC 33223 / 39E) (Clostridium thermohydrosulfuricum).